Consider the following 319-residue polypeptide: Syntaxin ufe1 (319 aa).

Topologically, residues 1–297 are cytoplasmic; it reads MTSRTNEFFG…IKAKSRSSRT (297 aa). The region spanning 228–290 is the t-SNARE coiled-coil homology domain; the sequence is LQEFEHTMER…SGGNQQLIKA (63 aa). A helical; Anchor for type IV membrane protein transmembrane segment spans residues 298–315; the sequence is ARLLFCIFTVMGLLLLSL. Residues 316-319 are Lumenal-facing; it reads DRIV.

Belongs to the syntaxin family. In terms of assembly, component of a SNARE complex consisting of ufe1, use1, sec20 and sec22 or ykt6. Interacts with sad1.

It is found in the endoplasmic reticulum membrane. Syntaxin required for targeting and fusion of Golgi-derived retrograde transport vesicles with the ER. The polypeptide is Syntaxin ufe1 (ufe1) (Schizosaccharomyces pombe (strain 972 / ATCC 24843) (Fission yeast)).